Here is a 544-residue protein sequence, read N- to C-terminus: Methionine--tRNA ligase (544 aa).

Residues 10 to 20 (PYANGSLHLGH) carry the 'HIGH' region motif. Positions 141, 144, 153, and 156 each coordinate Zn(2+). The short motif at 329-333 (KLSTS) is the 'KMSKS' region element. T332 is a binding site for ATP.

The protein belongs to the class-I aminoacyl-tRNA synthetase family. MetG type 1 subfamily. In terms of assembly, monomer. Zn(2+) serves as cofactor.

The protein localises to the cytoplasm. It catalyses the reaction tRNA(Met) + L-methionine + ATP = L-methionyl-tRNA(Met) + AMP + diphosphate. Its function is as follows. Is required not only for elongation of protein synthesis but also for the initiation of all mRNA translation through initiator tRNA(fMet) aminoacylation. The protein is Methionine--tRNA ligase of Bacillus cereus (strain B4264).